We begin with the raw amino-acid sequence, 231 residues long: Large ribosomal subunit protein uL1 (231 aa).

It belongs to the universal ribosomal protein uL1 family. Part of the 50S ribosomal subunit.

Functionally, binds directly to 23S rRNA. The L1 stalk is quite mobile in the ribosome, and is involved in E site tRNA release. In terms of biological role, protein L1 is also a translational repressor protein, it controls the translation of the L11 operon by binding to its mRNA. This Ruthia magnifica subsp. Calyptogena magnifica protein is Large ribosomal subunit protein uL1.